A 206-amino-acid chain; its full sequence is Pyridoxine/pyridoxamine 5'-phosphate oxidase (206 aa).

FMN-binding positions include 53-58, 68-69, lysine 75, and glutamine 97; these read RMVLLK and YT. Substrate is bound at residue lysine 58. Positions 115, 119, and 123 each coordinate substrate. Residues 132-133 and tryptophan 177 each bind FMN; that span reads QS. 183–185 contacts substrate; it reads RLH. Arginine 187 lines the FMN pocket.

It belongs to the pyridoxamine 5'-phosphate oxidase family. Homodimer. It depends on FMN as a cofactor.

It catalyses the reaction pyridoxamine 5'-phosphate + O2 + H2O = pyridoxal 5'-phosphate + H2O2 + NH4(+). The catalysed reaction is pyridoxine 5'-phosphate + O2 = pyridoxal 5'-phosphate + H2O2. The protein operates within cofactor metabolism; pyridoxal 5'-phosphate salvage; pyridoxal 5'-phosphate from pyridoxamine 5'-phosphate: step 1/1. It functions in the pathway cofactor metabolism; pyridoxal 5'-phosphate salvage; pyridoxal 5'-phosphate from pyridoxine 5'-phosphate: step 1/1. In terms of biological role, catalyzes the oxidation of either pyridoxine 5'-phosphate (PNP) or pyridoxamine 5'-phosphate (PMP) into pyridoxal 5'-phosphate (PLP). This is Pyridoxine/pyridoxamine 5'-phosphate oxidase from Agrobacterium fabrum (strain C58 / ATCC 33970) (Agrobacterium tumefaciens (strain C58)).